We begin with the raw amino-acid sequence, 187 residues long: MLPDKGWLVEARRVPSPHYDCRPDDEKPSLLVVHNISLPPGEFGGPWIDALFTGTIDPDAHPFFAEIAHLRVSAHCLIRRDGEIVQYVPFDKRAWHAGVSNYQGRERCNDFSIGIELEGTDTLAYTDAQYQQLAAVTRTLIASYPAIADNMTGHCNITPDRKTDPGPAFDWPRFRALVALSSHKEMT.

An N-acetylmuramoyl-L-alanine amidase domain is found at 29–167 (SLLVVHNISL…TPDRKTDPGP (139 aa)). H34 provides a ligand contact to Zn(2+). The active-site Proton acceptor is the E116. Zn(2+)-binding residues include H154 and D164.

The protein belongs to the N-acetylmuramoyl-L-alanine amidase 2 family. Zn(2+) serves as cofactor.

The protein localises to the cytoplasm. The enzyme catalyses Hydrolyzes the link between N-acetylmuramoyl residues and L-amino acid residues in certain cell-wall glycopeptides.. Its function is as follows. Involved in cell wall peptidoglycan recycling. Specifically cleaves the amide bond between the lactyl group of N-acetylmuramic acid and the alpha-amino group of the L-alanine in degradation products containing an anhydro N-acetylmuramyl moiety. The protein is 1,6-anhydro-N-acetylmuramyl-L-alanine amidase AmpD (ampD) of Salmonella typhimurium (strain LT2 / SGSC1412 / ATCC 700720).